Reading from the N-terminus, the 233-residue chain is 2,3,4,5-tetrahydropyridine-2,6-dicarboxylate N-acetyltransferase (233 aa).

Belongs to the transferase hexapeptide repeat family. DapH subfamily.

The catalysed reaction is (S)-2,3,4,5-tetrahydrodipicolinate + acetyl-CoA + H2O = L-2-acetamido-6-oxoheptanedioate + CoA. The protein operates within amino-acid biosynthesis; L-lysine biosynthesis via DAP pathway; LL-2,6-diaminopimelate from (S)-tetrahydrodipicolinate (acetylase route): step 1/3. Functionally, catalyzes the transfer of an acetyl group from acetyl-CoA to tetrahydrodipicolinate. In Thermotoga petrophila (strain ATCC BAA-488 / DSM 13995 / JCM 10881 / RKU-1), this protein is 2,3,4,5-tetrahydropyridine-2,6-dicarboxylate N-acetyltransferase.